Consider the following 355-residue polypeptide: MSALGSRETHVLTTIIESYITSAAPVGSRTVSRRSGLALSPASMRNTMSDLTDMGFLEQPHTSAGRIPTPKAFRLYVDALLRQSARRDEAPLHMVEALHGHEPEVGALLRRASNLVSEHARQVSMVLAPGPAEARLRSLDFVPAGEGLVLAVLVLEGGMVRTRLVRDDTHFGSDELVRFGNYINAHYRGHTLSGIRNSIHHELSGGGAQLEAMCAQALALGSLALDSIDDDRELYVNGTRNILDQAEFAELGRMRELMDALEERSRLLELLDRTILEDDVHVTFYPDDVSGAAQRRAPDGLRGCSMVSAPYGGASPLGVIGVIGPVRMDYRKVLPLVGAVSRVLTQLLRERFATG.

The protein belongs to the HrcA family.

Its function is as follows. Negative regulator of class I heat shock genes (grpE-dnaK-dnaJ and groELS operons). Prevents heat-shock induction of these operons. This Nitratidesulfovibrio vulgaris (strain DP4) (Desulfovibrio vulgaris) protein is Heat-inducible transcription repressor HrcA.